Consider the following 401-residue polypeptide: Argininosuccinate synthase (401 aa).

Residues 11-19 (AYSGGLDTS) and alanine 38 each bind ATP. L-citrulline-binding residues include tyrosine 89 and serine 94. Glycine 119 is an ATP binding site. Residues threonine 121, asparagine 125, and aspartate 126 each coordinate L-aspartate. L-citrulline is bound at residue asparagine 125. Residues arginine 129, serine 177, serine 186, glutamate 262, and tyrosine 274 each coordinate L-citrulline.

The protein belongs to the argininosuccinate synthase family. Type 1 subfamily. Homotetramer.

The protein resides in the cytoplasm. It catalyses the reaction L-citrulline + L-aspartate + ATP = 2-(N(omega)-L-arginino)succinate + AMP + diphosphate + H(+). Its pathway is amino-acid biosynthesis; L-arginine biosynthesis; L-arginine from L-ornithine and carbamoyl phosphate: step 2/3. In Nitratidesulfovibrio vulgaris (strain DSM 19637 / Miyazaki F) (Desulfovibrio vulgaris), this protein is Argininosuccinate synthase.